We begin with the raw amino-acid sequence, 181 residues long: HGPRTase-like protein 2 (181 aa).

Belongs to the purine/pyrimidine phosphoribosyltransferase family. Archaeal HPRT subfamily.

May catalyze a purine salvage reaction, the substrate is unknown. The protein is HGPRTase-like protein 2 of Haloquadratum walsbyi (strain DSM 16854 / JCM 12705 / C23).